We begin with the raw amino-acid sequence, 549 residues long: Lipase 1 (549 aa).

The N-terminal stretch at 1 to 15 (MELALALSLIASVAA) is a signal peptide. Cys75 and Cys112 are joined by a disulfide. Residue Ser224 is the Acyl-ester intermediate of the active site. Cys283 and Cys292 are joined by a disulfide. Asn329 carries an N-linked (GlcNAc...) asparagine glycan. Glu356 acts as the Charge relay system in catalysis. Asn366 carries N-linked (GlcNAc...) asparagine glycosylation. The active-site Charge relay system is His464.

It belongs to the type-B carboxylesterase/lipase family.

The catalysed reaction is a triacylglycerol + H2O = a diacylglycerol + a fatty acid + H(+). This is Lipase 1 (LIP1) from Diutina rugosa (Yeast).